The following is a 411-amino-acid chain: 2-oxoglutarate-dependent dioxygenase AOP3 (411 aa).

The Fe2OG dioxygenase domain maps to 259–356 (GNASVGAKEA…RYAAALFSNP (98 aa)). Fe cation-binding residues include His279, Asp281, and His336. Arg347 provides a ligand contact to 2-oxoglutarate.

It belongs to the iron/ascorbate-dependent oxidoreductase family. Fe(2+) serves as cofactor. Not expressed.

2-oxoglutarate-dependent dioxygenase involved in glucosinolates biosynthesis. Catalyzes the conversion of methylsulfinylalkyl glucosinolates to hydroxyalkyl glucosinolates. In Arabidopsis thaliana (Mouse-ear cress), this protein is 2-oxoglutarate-dependent dioxygenase AOP3 (AOP3).